A 265-amino-acid chain; its full sequence is Tryptophan synthase alpha chain (265 aa).

Active-site proton acceptor residues include E48 and D59.

This sequence belongs to the TrpA family. Tetramer of two alpha and two beta chains.

It carries out the reaction (1S,2R)-1-C-(indol-3-yl)glycerol 3-phosphate + L-serine = D-glyceraldehyde 3-phosphate + L-tryptophan + H2O. Its pathway is amino-acid biosynthesis; L-tryptophan biosynthesis; L-tryptophan from chorismate: step 5/5. The alpha subunit is responsible for the aldol cleavage of indoleglycerol phosphate to indole and glyceraldehyde 3-phosphate. In Vesicomyosocius okutanii subsp. Calyptogena okutanii (strain HA), this protein is Tryptophan synthase alpha chain.